Consider the following 137-residue polypeptide: Protein FrxA (137 aa).

This is Protein FrxA (frxA) from Pyrococcus furiosus (strain ATCC 43587 / DSM 3638 / JCM 8422 / Vc1).